A 164-amino-acid chain; its full sequence is Peptide deformylase-like (164 aa).

Glutamate 133 is an active-site residue.

It belongs to the polypeptide deformylase family.

In Agrobacterium fabrum (strain C58 / ATCC 33970) (Agrobacterium tumefaciens (strain C58)), this protein is Peptide deformylase-like.